A 428-amino-acid polypeptide reads, in one-letter code: Histidine--tRNA ligase (428 aa).

This sequence belongs to the class-II aminoacyl-tRNA synthetase family. Homodimer.

It localises to the cytoplasm. The catalysed reaction is tRNA(His) + L-histidine + ATP = L-histidyl-tRNA(His) + AMP + diphosphate + H(+). In Bordetella avium (strain 197N), this protein is Histidine--tRNA ligase.